The primary structure comprises 146 residues: Large ribosomal subunit protein uL15 (146 aa).

A compositionally biased stretch (basic and acidic residues) spans 1 to 10 (MKLHELKPAE). Positions 1–51 (MKLHELKPAEGSRQVRNRVGRGTSSGNGKTAGRGQKGQKARSGGGVRLGFE) are disordered. 2 stretches are compositionally biased toward gly residues: residues 23–35 (TSSG…GRGQ) and 42–51 (SGGGVRLGFE).

Belongs to the universal ribosomal protein uL15 family. Part of the 50S ribosomal subunit.

Its function is as follows. Binds to the 23S rRNA. The chain is Large ribosomal subunit protein uL15 from Enterococcus faecalis (strain ATCC 700802 / V583).